The sequence spans 429 residues: Adenylosuccinate synthetase (429 aa).

Residues 12 to 18 and 40 to 42 each bind GTP; these read GDEGKGK and GHT. Catalysis depends on Asp13, which acts as the Proton acceptor. The Mg(2+) site is built by Asp13 and Gly40. IMP contacts are provided by residues 13–16, 38–41, Thr129, Arg143, Gln224, Thr239, and Arg303; these read DEGK and NAGH. The active-site Proton donor is the His41. 299-305 provides a ligand contact to substrate; the sequence is VTTGRAR. Residues Arg305, 331–333, and 413–415 contribute to the GTP site; these read KLD and GVG.

This sequence belongs to the adenylosuccinate synthetase family. Homodimer. The cofactor is Mg(2+).

The protein resides in the cytoplasm. The catalysed reaction is IMP + L-aspartate + GTP = N(6)-(1,2-dicarboxyethyl)-AMP + GDP + phosphate + 2 H(+). The protein operates within purine metabolism; AMP biosynthesis via de novo pathway; AMP from IMP: step 1/2. Functionally, plays an important role in the de novo pathway of purine nucleotide biosynthesis. Catalyzes the first committed step in the biosynthesis of AMP from IMP. This chain is Adenylosuccinate synthetase, found in Rhodococcus opacus (strain B4).